Here is a 385-residue protein sequence, read N- to C-terminus: Probable dual-specificity RNA methyltransferase RlmN (385 aa).

Residues 1-35 (MNVKEPAEEAAIQLRTERQRIEPEGEEQSEQPTDL) form a disordered region. Catalysis depends on glutamate 121, which acts as the Proton acceptor. Positions 132–367 (TRDRVTVCLS…AVIREERGQD (236 aa)) constitute a Radical SAM core domain. A disulfide bridge connects residues cysteine 139 and cysteine 372. The [4Fe-4S] cluster site is built by cysteine 146, cysteine 150, and cysteine 153. Residues 198-199 (GE), serine 230, 253-255 (SLH), and asparagine 329 each bind S-adenosyl-L-methionine. The active-site S-methylcysteine intermediate is the cysteine 372.

This sequence belongs to the radical SAM superfamily. RlmN family. Requires [4Fe-4S] cluster as cofactor.

It is found in the cytoplasm. It catalyses the reaction adenosine(2503) in 23S rRNA + 2 reduced [2Fe-2S]-[ferredoxin] + 2 S-adenosyl-L-methionine = 2-methyladenosine(2503) in 23S rRNA + 5'-deoxyadenosine + L-methionine + 2 oxidized [2Fe-2S]-[ferredoxin] + S-adenosyl-L-homocysteine. The catalysed reaction is adenosine(37) in tRNA + 2 reduced [2Fe-2S]-[ferredoxin] + 2 S-adenosyl-L-methionine = 2-methyladenosine(37) in tRNA + 5'-deoxyadenosine + L-methionine + 2 oxidized [2Fe-2S]-[ferredoxin] + S-adenosyl-L-homocysteine. Its function is as follows. Specifically methylates position 2 of adenine 2503 in 23S rRNA and position 2 of adenine 37 in tRNAs. This Heliobacterium modesticaldum (strain ATCC 51547 / Ice1) protein is Probable dual-specificity RNA methyltransferase RlmN.